Here is a 159-residue protein sequence, read N- to C-terminus: Ribosomal RNA large subunit methyltransferase H (159 aa).

Residues Leu-76, Gly-107, and 126-131 (ISSLTL) each bind S-adenosyl-L-methionine.

The protein belongs to the RNA methyltransferase RlmH family. In terms of assembly, homodimer.

The protein localises to the cytoplasm. The catalysed reaction is pseudouridine(1915) in 23S rRNA + S-adenosyl-L-methionine = N(3)-methylpseudouridine(1915) in 23S rRNA + S-adenosyl-L-homocysteine + H(+). Functionally, specifically methylates the pseudouridine at position 1915 (m3Psi1915) in 23S rRNA. This Cupriavidus metallidurans (strain ATCC 43123 / DSM 2839 / NBRC 102507 / CH34) (Ralstonia metallidurans) protein is Ribosomal RNA large subunit methyltransferase H.